The chain runs to 258 residues: Ribonuclease PH (258 aa).

Phosphate contacts are provided by residues Arg-86 and 124–126; that span reads GTR.

This sequence belongs to the RNase PH family. As to quaternary structure, homohexameric ring arranged as a trimer of dimers.

It catalyses the reaction tRNA(n+1) + phosphate = tRNA(n) + a ribonucleoside 5'-diphosphate. Phosphorolytic 3'-5' exoribonuclease that plays an important role in tRNA 3'-end maturation. Removes nucleotide residues following the 3'-CCA terminus of tRNAs; can also add nucleotides to the ends of RNA molecules by using nucleoside diphosphates as substrates, but this may not be physiologically important. Probably plays a role in initiation of 16S rRNA degradation (leading to ribosome degradation) during starvation. This chain is Ribonuclease PH, found in Caldicellulosiruptor saccharolyticus (strain ATCC 43494 / DSM 8903 / Tp8T 6331).